Consider the following 638-residue polypeptide: Neuroendocrine convertase 2 (638 aa).

A signal peptide spans 1-25 (MRGGCISQGKAAAGLLFCVMVFASA). A propeptide spanning residues 26–109 (ERPVFTNHFL…QQEGFNRKKR (84 aa)) is cleaved from the precursor. Positions 129–453 (QWYLINTGQA…YGVLDAGAMV (325 aa)) constitute a Peptidase S8 domain. Catalysis depends on charge relay system residues Asp-167 and His-208. 2 cysteine pairs are disulfide-bonded: Cys-225/Cys-376 and Cys-317/Cys-347. An N-linked (GlcNAc...) asparagine glycan is attached at Asn-375. Catalysis depends on Ser-384, which acts as the Charge relay system. The 137-residue stretch at 461–597 (TVPERFHCVG…TLMLHGTQSA (137 aa)) folds into the P/Homo B domain. Cys-468 and Cys-494 are oxidised to a cystine. Asn-514 and Asn-524 each carry an N-linked (GlcNAc...) asparagine glycan.

The protein belongs to the peptidase S8 family. Furin subfamily.

Its subcellular location is the cytoplasmic vesicle. The protein localises to the secretory vesicle. It is found in the secreted. The catalysed reaction is Release of protein hormones and neuropeptides from their precursors, generally by hydrolysis of -Lys-Arg-|- bonds.. Functionally, serine endopeptidase which is involved in the processing of hormone and other protein precursors at sites comprised of pairs of basic amino acid residues. Responsible for the release of glucagon from proglucagon in pancreatic A cells. The chain is Neuroendocrine convertase 2 (PCSK2) from Bos taurus (Bovine).